A 493-amino-acid chain; its full sequence is ATP-dependent rRNA helicase RRP3 (493 aa).

Basic and acidic residues-rich tracts occupy residues 26-42 (ALEN…KDSE) and 51-62 (ERPAKKQAKDEK). The disordered stretch occupies residues 26–68 (ALENQKKMQAASRKDSESDSSDEEVERPAKKQAKDEKVEEPEE). The Q motif motif lies at 73 to 101 (ESFAQLNLVPELIQACQNLNFTKPTPIQA). One can recognise a Helicase ATP-binding domain in the interval 104-276 (IPPALAGSDV…RASLTNPVKC (173 aa)). 117–124 (AQTGSGKT) contacts ATP. Positions 223-226 (DEAD) match the DEAD box motif. One can recognise a Helicase C-terminal domain in the interval 307-453 (LLNEFIGKTV…NIILTLRDSV (147 aa)). The segment at 467-493 (RNKEKQARGKGRRGRMMAKENMDREEK) is disordered. The span at 483–493 (MAKENMDREEK) shows a compositional bias: basic and acidic residues.

Belongs to the DEAD box helicase family. DDX47/RRP3 subfamily. As to quaternary structure, interacts with the SSU processome.

It localises to the nucleus. The enzyme catalyses ATP + H2O = ADP + phosphate + H(+). Functionally, ATP-dependent rRNA helicase required for pre-ribosomal RNA processing. Involved in the maturation of the 35S-pre-rRNA and to its cleavage to mature 18S rRNA. The chain is ATP-dependent rRNA helicase RRP3 from Candida glabrata (strain ATCC 2001 / BCRC 20586 / JCM 3761 / NBRC 0622 / NRRL Y-65 / CBS 138) (Yeast).